Reading from the N-terminus, the 361-residue chain is Protein YIM1-2 (361 aa).

Belongs to the YIM1 family.

The protein resides in the lipid droplet. It is found in the mitochondrion. The chain is Protein YIM1-2 (YIM1-2) from Lachancea thermotolerans (strain ATCC 56472 / CBS 6340 / NRRL Y-8284) (Yeast).